The primary structure comprises 607 residues: Autophagy-related protein 22-2 (607 aa).

Residues 9 to 31 are disordered; the sequence is FQSPSPDEGVQQRPPRYVGEDTT. Residues 44 to 64 form a helical membrane-spanning segment; the sequence is YGIAAEVFAVCGVGSFLPLTL. N-linked (GlcNAc...) asparagine glycans are attached at residues Asn88 and Asn91. Helical transmembrane passes span 111 to 131, 143 to 160, and 161 to 178; these read SFAMYTFSLAVLIQALTLISF, TLLMVFGFAGALASMLFV, and FIAPPLFVIGSILVVVGV. A disordered region spans residues 203-263; sequence QEGKADDGTE…GMGTKAPLSS (61 aa). Asn235 carries N-linked (GlcNAc...) asparagine glycosylation. The next 8 membrane-spanning stretches (helical) occupy residues 277 to 297, 310 to 330, 381 to 401, 415 to 435, 450 to 470, 484 to 504, 521 to 543, and 552 to 572; these read GIGLGYCAAVFVQIISIIMLL, TLPMRFVLLLVGIWWGAFTLV, VLIFLVAWFLLSDAMATVSGT, PLIGLLSITATLSGMTGAFLW, IILCIALFEMIPLYGLLAYIP, WEIFPLAIVHGVVSGGLASYC, YALYAATDKGSSFIGPAIVGGIV, and GFFFMAILIVLPIPLVWMVNA. The tract at residues 585–607 is disordered; that stretch reads TLGKSHGGPAEDAQEAEGLLARE.

Belongs to the ATG22 family.

The protein localises to the vacuole membrane. Its function is as follows. Vacuolar effluxer which mediate the efflux of amino acids resulting from autophagic degradation. The release of autophagic amino acids allows the maintenance of protein synthesis and viability during nitrogen starvation. The sequence is that of Autophagy-related protein 22-2 (atg22-2) from Penicillium rubens (strain ATCC 28089 / DSM 1075 / NRRL 1951 / Wisconsin 54-1255) (Penicillium chrysogenum).